Consider the following 378-residue polypeptide: Flap endonuclease 1 (378 aa).

Residues 1-104 (MGVKDLSKVI…SELEKRTERR (104 aa)) are N-domain. Asp-34 serves as a coordination point for Mg(2+). The DNA site is built by Arg-47 and Arg-70. Position 86 (Asp-86) interacts with Mg(2+). Residues 90–113 (PQMKTSELEKRTERRTEAEKQRND) form a disordered region. A compositionally biased stretch (basic and acidic residues) spans 95–113 (SELEKRTERRTEAEKQRND). Residues 122–253 (SVNKFEKRLV…KKAFELIKKY (132 aa)) form an I-domain region. 4 residues coordinate Mg(2+): Glu-158, Glu-160, Asp-179, and Asp-181. Glu-158 is a binding site for DNA. The DNA site is built by Gly-231 and Asp-233. Asp-233 is a Mg(2+) binding site. Positions 336–344 (QQARIDSFF) are interaction with PCNA. The tract at residues 348–378 (KVVTSETTKRKNEEKNNLKKRGPSLGKKAKK) is disordered. Positions 354–364 (TTKRKNEEKNN) are enriched in basic and acidic residues. Over residues 365 to 378 (LKKRGPSLGKKAKK) the composition is skewed to basic residues.

The protein belongs to the XPG/RAD2 endonuclease family. FEN1 subfamily. As to quaternary structure, interacts with PCNA. Three molecules of FEN1 bind to one PCNA trimer with each molecule binding to one PCNA monomer. PCNA stimulates the nuclease activity without altering cleavage specificity. Requires Mg(2+) as cofactor. Post-translationally, phosphorylated. Phosphorylation upon DNA damage induces relocalization to the nuclear plasma.

It is found in the nucleus. It localises to the nucleolus. The protein localises to the nucleoplasm. The protein resides in the mitochondrion. Structure-specific nuclease with 5'-flap endonuclease and 5'-3' exonuclease activities involved in DNA replication and repair. During DNA replication, cleaves the 5'-overhanging flap structure that is generated by displacement synthesis when DNA polymerase encounters the 5'-end of a downstream Okazaki fragment. It enters the flap from the 5'-end and then tracks to cleave the flap base, leaving a nick for ligation. Also involved in the long patch base excision repair (LP-BER) pathway, by cleaving within the apurinic/apyrimidinic (AP) site-terminated flap. Acts as a genome stabilization factor that prevents flaps from equilibrating into structures that lead to duplications and deletions. Also possesses 5'-3' exonuclease activity on nicked or gapped double-stranded DNA, and exhibits RNase H activity. Also involved in replication and repair of rDNA and in repairing mitochondrial DNA. This is Flap endonuclease 1 from Brugia malayi (Filarial nematode worm).